Consider the following 449-residue polypeptide: DNA-directed RNA polymerase subunit Rpo1C (449 aa).

Residues 1 to 68 are unknown; that stretch reads MQDVIKKIED…EGEELLKAVE (68 aa). Residues 69-449 form a DNA-directed RNA polymerase subunit Rpo1C region; the sequence is DEYLRILKVR…TGSVSVIMKK (381 aa).

It belongs to the RNA polymerase beta' chain family. Part of the RNA polymerase complex.

It localises to the cytoplasm. The enzyme catalyses RNA(n) + a ribonucleoside 5'-triphosphate = RNA(n+1) + diphosphate. DNA-dependent RNA polymerase (RNAP) catalyzes the transcription of DNA into RNA using the four ribonucleoside triphosphates as substrates. Forms part of the jaw domain. This is DNA-directed RNA polymerase subunit Rpo1C from Methanothermobacter thermautotrophicus (strain Winter) (Methanobacterium thermoautotrophicum).